Here is a 270-residue protein sequence, read N- to C-terminus: Phosphonoacetaldehyde hydrolase (270 aa).

D11 serves as the catalytic Nucleophile. Residues D11 and A13 each coordinate Mg(2+). K53 acts as the Schiff-base intermediate with substrate in catalysis. D187 is a Mg(2+) binding site.

Belongs to the HAD-like hydrolase superfamily. PhnX family. Homodimer. Mg(2+) is required as a cofactor.

The catalysed reaction is phosphonoacetaldehyde + H2O = acetaldehyde + phosphate + H(+). Functionally, involved in phosphonate degradation. The chain is Phosphonoacetaldehyde hydrolase from Salmonella gallinarum (strain 287/91 / NCTC 13346).